The chain runs to 88 residues: Elongation factor 1-beta (88 aa).

Belongs to the EF-1-beta/EF-1-delta family.

In terms of biological role, promotes the exchange of GDP for GTP in EF-1-alpha/GDP, thus allowing the regeneration of EF-1-alpha/GTP that could then be used to form the ternary complex EF-1-alpha/GTP/AAtRNA. The chain is Elongation factor 1-beta from Methanosphaera stadtmanae (strain ATCC 43021 / DSM 3091 / JCM 11832 / MCB-3).